The following is a 747-amino-acid chain: Tegument protein UL46 homolog (747 aa).

Disordered stretches follow at residues 437-484 (FCCP…SPRT), 525-593 (QRSD…DYMR), 611-665 (TPYM…PEVV), and 689-747 (SASR…VSSL). Residues 465–484 (LRSSRQLPTSPPSNIVSPRT) show a composition bias toward polar residues. Over residues 528-540 (DSSSSDNSTCSST) the composition is skewed to low complexity. The span at 541–553 (ETQYITLPSTPSP) shows a compositional bias: polar residues. 2 stretches are compositionally biased toward basic and acidic residues: residues 707 to 724 (VCRE…DGFI) and 736 to 747 (KHPDQTERVSSL).

This sequence belongs to the herpesviridae HHV-1 VP11/12 protein family.

Its subcellular location is the virion tegument. The protein localises to the host cell membrane. Functionally, modulates alpha trans-inducing factor-dependent activation of alpha genes. This chain is Tegument protein UL46 homolog, found in Equine herpesvirus 1 (strain Ab4p) (EHV-1).